Consider the following 800-residue polypeptide: Protein gfi-3 (800 aa).

The stretch at 346-366 (ESLQQAQLRNDEICHQMANIE) forms a coiled coil. TPR repeat units follow at residues 526 to 559 (AIGA…YPEE) and 637 to 670 (IRIH…AENT).

As to quaternary structure, the APC/C complex is probably composed of at least 12 subunits: apc-2, apc-10, apc-11, cdc-26, emb-1, emb-27, emb-30, mat-1, mat-2, mat-3, such-1 and gfi-3. As to expression, expressed in gut cells and mature sperm stored in the spermatheca.

It functions in the pathway protein modification; protein ubiquitination. In terms of biological role, probable component of the anaphase promoting complex/cyclosome (APC/C), a cell cycle-regulated E3 ubiquitin ligase that controls progression through mitosis and the G1 phase of the cell cycle. The APC/C complex acts by mediating ubiquitination and subsequent degradation of target proteins. Required for the metaphase to anaphase transition in meiosis. The polypeptide is Protein gfi-3 (Caenorhabditis elegans).